We begin with the raw amino-acid sequence, 348 residues long: Dihydroorotase (348 aa).

His17 and His19 together coordinate Zn(2+). Substrate-binding positions include 19-21 (HLR) and Asn45. The Zn(2+) site is built by Lys103, His140, and His178. An N6-carboxylysine modification is found at Lys103. His140 is a substrate binding site. Position 223 (Leu223) interacts with substrate. Position 251 (Asp251) interacts with Zn(2+). Residue Asp251 is part of the active site. The substrate site is built by His255 and Ala267.

This sequence belongs to the metallo-dependent hydrolases superfamily. DHOase family. Class II DHOase subfamily. As to quaternary structure, homodimer. The cofactor is Zn(2+).

The enzyme catalyses (S)-dihydroorotate + H2O = N-carbamoyl-L-aspartate + H(+). Its pathway is pyrimidine metabolism; UMP biosynthesis via de novo pathway; (S)-dihydroorotate from bicarbonate: step 3/3. Functionally, catalyzes the reversible cyclization of carbamoyl aspartate to dihydroorotate. The sequence is that of Dihydroorotase from Shigella sonnei (strain Ss046).